A 70-amino-acid chain; its full sequence is DNA-directed RNA polymerase subunit epsilon (70 aa).

It belongs to the RNA polymerase subunit epsilon family. In terms of assembly, RNAP is composed of a core of 2 alpha, a beta and a beta' subunit. The core is associated with a delta subunit, and at least one of epsilon or omega. When a sigma factor is associated with the core the holoenzyme is formed, which can initiate transcription.

It carries out the reaction RNA(n) + a ribonucleoside 5'-triphosphate = RNA(n+1) + diphosphate. Its function is as follows. A non-essential component of RNA polymerase (RNAP). The polypeptide is DNA-directed RNA polymerase subunit epsilon (Lacticaseibacillus casei (strain BL23) (Lactobacillus casei)).